Reading from the N-terminus, the 726-residue chain is Disintegrin and metalloproteinase domain-containing protein 20 (726 aa).

The N-terminal stretch at 1–31 (MAVGEPLVHIRVTLLLLWFGMFLSISGHSQA) is a signal peptide. Residues 32–206 (RPSQYFTSPE…SSFVGWWTHQ (175 aa)) constitute a propeptide that is removed on maturation. Residues 171–178 (MRCGLTEE) carry the Cysteine switch motif. Cysteine 173 is a Zn(2+) binding site. Residues asparagine 191 and asparagine 226 are each glycosylated (N-linked (GlcNAc...) asparagine). In terms of domain architecture, Peptidase M12B spans 207-400 (RFVELVVVVD…SGLCIQPPPY (194 aa)). At 207 to 693 (RFVELVVVVD…GLNVMGKLRY (487 aa)) the chain is on the extracellular side. Disulfide bonds link cysteine 317–cysteine 394, cysteine 357–cysteine 379, and cysteine 359–cysteine 364. Histidine 342 contributes to the Zn(2+) binding site. Glutamate 343 is an active-site residue. The Zn(2+) site is built by histidine 346 and histidine 352. 4 N-linked (GlcNAc...) asparagine glycosylation sites follow: asparagine 378, asparagine 438, asparagine 479, and asparagine 587. The 87-residue stretch at 407 to 493 (LKYCGNLVVE…QCPDDVYVQD (87 aa)) folds into the Disintegrin domain. An intrachain disulfide couples cysteine 465 to cysteine 485. 3 cysteine pairs are disulfide-bonded: cysteine 635–cysteine 646, cysteine 640–cysteine 652, and cysteine 654–cysteine 663. The 29-residue stretch at 635 to 663 (CQPKTCNMRGICNNKQHCHCNHEWAPPYC) folds into the EGF-like domain. The chain crosses the membrane as a helical span at residues 694 to 714 (LSLLCLLPLVAFLLFCLHVLF). Residues 715–726 (KKRTKSKEDEEG) lie on the Cytoplasmic side of the membrane.

Requires Zn(2+) as cofactor. Post-translationally, has no obvious cleavage site for furin endopeptidase, suggesting that the proteolytic processing is regulated. As to expression, testis specific.

Its subcellular location is the membrane. May be involved in sperm maturation and/or fertilization. This is Disintegrin and metalloproteinase domain-containing protein 20 (ADAM20) from Homo sapiens (Human).